The chain runs to 1256 residues: Topoisomerase 1-associated factor 1 (1256 aa).

Over residues 26-38 (GFIVSDEENDNLE) the composition is skewed to acidic residues. 4 disordered regions span residues 26 to 58 (GFIV…VDEY), 695 to 725 (SKKK…RTHA), 1052 to 1121 (SGAE…EAFF), and 1176 to 1256 (SDGV…DEDE). Residues 39-53 (NENRNERDPDSRNQD) show a composition bias toward basic and acidic residues. Basic residues predominate over residues 1060–1086 (GKARKRGNKSSSTIKKKSLQSRSRRPP). Basic and acidic residues-rich tracts occupy residues 1097–1110 (ELRK…FVHD) and 1179–1190 (VDTHSHQDDKSQ). Over residues 1194 to 1204 (SENEDSSEEVS) the composition is skewed to acidic residues. Residues 1222-1231 (DNNVSENYVS) show a composition bias toward low complexity.

The protein belongs to the timeless family. As to quaternary structure, component of the fork protection complex (FPC) consisting of TOF1 and CSM3.

Its subcellular location is the nucleus. Functionally, forms a fork protection complex (FPC) with CSM3 and which is required for chromosome segregation during meiosis and DNA damage repair. FPC coordinates leading and lagging strand synthesis and moves with the replication fork. FPC stabilizes replication forks in a configuration that is recognized by replication checkpoint sensors. The polypeptide is Topoisomerase 1-associated factor 1 (TOF1) (Scheffersomyces stipitis (strain ATCC 58785 / CBS 6054 / NBRC 10063 / NRRL Y-11545) (Yeast)).